A 309-amino-acid chain; its full sequence is UPF0282 protein Saci_0277 (309 aa).

It belongs to the UPF0282 family.

This chain is UPF0282 protein Saci_0277, found in Sulfolobus acidocaldarius (strain ATCC 33909 / DSM 639 / JCM 8929 / NBRC 15157 / NCIMB 11770).